The chain runs to 436 residues: Putative actin-fragmin kinase DDB_G0268748 (436 aa).

The interval 14–58 (DKNIDSGSSSSNIGGSSSNSSGTTNKRSSGNFNGSSASSSPSSST) is disordered. Residues 18–57 (DSGSSSSNIGGSSSNSSGTTNKRSSGNFNGSSASSSPSSS) show a composition bias toward low complexity.

The protein belongs to the protein kinase superfamily. AFK Ser/Thr protein kinase family.

The protein is Putative actin-fragmin kinase DDB_G0268748 of Dictyostelium discoideum (Social amoeba).